Reading from the N-terminus, the 372-residue chain is Glutamate 5-kinase (372 aa).

K14 serves as a coordination point for ATP. Substrate-binding residues include S54, D141, and N153. Residue 173–174 participates in ATP binding; it reads TD. The region spanning 280-358 is the PUA domain; sequence RGTLVLDDGA…EAIVRELGYM (79 aa).

Belongs to the glutamate 5-kinase family.

The protein resides in the cytoplasm. It carries out the reaction L-glutamate + ATP = L-glutamyl 5-phosphate + ADP. It functions in the pathway amino-acid biosynthesis; L-proline biosynthesis; L-glutamate 5-semialdehyde from L-glutamate: step 1/2. Catalyzes the transfer of a phosphate group to glutamate to form L-glutamate 5-phosphate. The polypeptide is Glutamate 5-kinase (Pseudomonas syringae pv. tomato (strain ATCC BAA-871 / DC3000)).